The sequence spans 556 residues: Arginine--tRNA ligase (556 aa).

Residues 132–142 (ANPTGDLHLGH) carry the 'HIGH' region motif.

It belongs to the class-I aminoacyl-tRNA synthetase family. Monomer.

Its subcellular location is the cytoplasm. The catalysed reaction is tRNA(Arg) + L-arginine + ATP = L-arginyl-tRNA(Arg) + AMP + diphosphate. In Bacillus subtilis (strain 168), this protein is Arginine--tRNA ligase (argS).